An 87-amino-acid chain; its full sequence is MKLTCVLVVLLLLLPYGDLITNNYIRGAARKVTPWRRNLKTRDVCDSLVGGHCIHNGCWCDQDAPHGNCCDTDGCTAAWWCPGTKWD.

The N-terminal stretch at 1-19 is a signal peptide; the sequence is MKLTCVLVVLLLLLPYGDL. The propeptide occupies 20–42; it reads ITNNYIRGAARKVTPWRRNLKTR. Disulfide bonds link Cys-45/Cys-58, Cys-53/Cys-70, Cys-60/Cys-75, and Cys-69/Cys-81. The residue at position 59 (Trp-59) is a 6'-bromotryptophan. Pro-65 is modified (4-hydroxyproline). 2 positions are modified to 6'-bromotryptophan: Trp-79 and Trp-80. A 4-hydroxyproline modification is found at Pro-82. Trp-86 is modified (6'-bromotryptophan).

As to expression, expressed by the venom duct.

The protein localises to the secreted. Functionally, mu-conotoxins block voltage-gated sodium channels. This toxin reversibly blocks voltage-gated sodium channel in cephalopods (tested on squid giant-fiber-lobe neurons) with an inhibitor constant (Ki) of 15 nmol/l, with no alteration in the voltage dependence of sodium conductance or on the kinetics of inactivation. Has no effect on sodium channels of the two gastropod S.luhuanus and A.californica (which are not natural prey). This is Mu-conotoxin cal12b from Californiconus californicus (California cone).